A 703-amino-acid chain; its full sequence is Meiotic coiled-coil protein 2 (703 aa).

Polar residues-rich tracts occupy residues 1–19 and 245–258; these read MQSI…SISE and TNVR…STPL. 3 disordered regions span residues 1–29, 245–265, and 284–309; these read MQSI…SELN, TNVR…DVDL, and ASTN…RSSS. A PUM-HD domain is found at 331 to 686; sequence NPSVIPESTS…KVAYLVEKWN (356 aa). Pumilio repeat units lie at residues 361–396, 397–432, 433–468, 469–504, 509–544, 545–580, 581–616, and 625–660; these read NVII…NIVD, SIIS…QMGS, AMLG…AMMD, ELFL…NVMN, ALRG…ECIE, EIIF…RVID, ALLN…LYLK, and RTRQ…LVIT.

The protein is Meiotic coiled-coil protein 2 (mcp2) of Schizosaccharomyces pombe (strain 972 / ATCC 24843) (Fission yeast).